Reading from the N-terminus, the 347-residue chain is Probable dual-specificity RNA methyltransferase RlmN (347 aa).

Glu-91 serves as the catalytic Proton acceptor. In terms of domain architecture, Radical SAM core spans 97–327; it reads YKYGNSICVS…ATVRREMGSD (231 aa). A disulfide bridge connects residues Cys-104 and Cys-332. [4Fe-4S] cluster contacts are provided by Cys-111, Cys-115, and Cys-118. S-adenosyl-L-methionine-binding positions include 158–159, Ser-190, 213–215, and Asn-289; these read GE and SLH. Cys-332 functions as the S-methylcysteine intermediate in the catalytic mechanism.

This sequence belongs to the radical SAM superfamily. RlmN family. Requires [4Fe-4S] cluster as cofactor.

The protein resides in the cytoplasm. It catalyses the reaction adenosine(2503) in 23S rRNA + 2 reduced [2Fe-2S]-[ferredoxin] + 2 S-adenosyl-L-methionine = 2-methyladenosine(2503) in 23S rRNA + 5'-deoxyadenosine + L-methionine + 2 oxidized [2Fe-2S]-[ferredoxin] + S-adenosyl-L-homocysteine. The catalysed reaction is adenosine(37) in tRNA + 2 reduced [2Fe-2S]-[ferredoxin] + 2 S-adenosyl-L-methionine = 2-methyladenosine(37) in tRNA + 5'-deoxyadenosine + L-methionine + 2 oxidized [2Fe-2S]-[ferredoxin] + S-adenosyl-L-homocysteine. In terms of biological role, specifically methylates position 2 of adenine 2503 in 23S rRNA and position 2 of adenine 37 in tRNAs. The polypeptide is Probable dual-specificity RNA methyltransferase RlmN (Clostridium perfringens (strain SM101 / Type A)).